The primary structure comprises 221 residues: Agamous-like MADS-box protein AGL14 (221 aa).

Residues 3-57 form the MADS-box domain; the sequence is RGKTEMKRIENATSRQVTFSKRRNGLLKKAFELSVLCDAEVALIIFSPRGKLYEF. In terms of domain architecture, K-box spans 87–177; sequence SQQSKDETYG…MEKCEMQGRG (91 aa).

In terms of assembly, interacts with AGL16. As to expression, preferentially expressed in roots. Expressed in lateral root cap, root epidermis, root endodermis, columella of the root meristematic region, the vascular cylinder in differentiated zones of the primary root and in emerged lateral root primordia. Expressed in pollen.

The protein resides in the nucleus. Functionally, transcriptional activator that regulates root development by controlling meristem size and patterning of the root apical meristem. Regulates auxin transport and gradients in the root meristematic cells via direct regulation of the auxin efflux carrier PIN1 and PIN4 gene expression. Binds specifically to the CArG-box DNA sequences in the promoter regions of PIN1 and PIN4 genes. Involved in the regulation of shoot apical meristem (SAM) cell identities and transitions. Promotes flowering transition and participates in flower meristem maintenance and determinacy. Positively regulates TFL1 and WUS expression. Binds directly to the TFL1 regulatory sequences. This Arabidopsis thaliana (Mouse-ear cress) protein is Agamous-like MADS-box protein AGL14.